Consider the following 309-residue polypeptide: Porphobilinogen deaminase (309 aa).

Cys242 carries the S-(dipyrrolylmethanemethyl)cysteine modification.

It belongs to the HMBS family. As to quaternary structure, monomer. The cofactor is dipyrromethane.

It catalyses the reaction 4 porphobilinogen + H2O = hydroxymethylbilane + 4 NH4(+). It participates in porphyrin-containing compound metabolism; protoporphyrin-IX biosynthesis; coproporphyrinogen-III from 5-aminolevulinate: step 2/4. Tetrapolymerization of the monopyrrole PBG into the hydroxymethylbilane pre-uroporphyrinogen in several discrete steps. The protein is Porphobilinogen deaminase of Pseudoalteromonas atlantica (strain T6c / ATCC BAA-1087).